The chain runs to 602 residues: Protein indeterminate-domain 5, chloroplastic (602 aa).

Low complexity-rich tracts occupy residues 1–10 (MAASSSSAAS) and 21–30 (HLLPPNSSAA). Residues 1-50 (MAASSSSAASFFGVRQDDQSHLLPPNSSAAAPPPPPPHHQAPLPPLEAPP) constitute a chloroplast transit peptide. The tract at residues 1-65 (MAASSSSAAS…NQPRTPNSDA (65 aa)) is disordered. A compositionally biased stretch (pro residues) spans 31 to 48 (APPPPPPHHQAPLPPLEA). Threonine 60 carries the phosphothreonine modification. Position 71 is a phosphoserine (serine 71). 2 C2H2-type zinc fingers span residues 81–103 (FICE…RRGH) and 122–152 (YLCP…YRKH). The segment at 157-180 (WKCDKCSKRYAVQSDWKAHSKTCG) adopts a C2H2-type 2; degenerate zinc-finger fold. The Zn(2+) site is built by cysteine 159, cysteine 162, histidine 175, cysteine 179, cysteine 186, cysteine 188, histidine 201, and cysteine 205. The segment at 184–207 (YRCDCGTLFSRRDSFITHRAFCDA) adopts a CCHC-type 2; atypical zinc-finger fold. Residues 194 to 206 (RRDSFITHRAFCD) are SHR-binding. Disordered regions lie at residues 443–467 (KAAQ…NNAS) and 537–602 (KSMS…HASF). Low complexity-rich tracts occupy residues 448–467 (GSTS…NNAS), 546–560 (QQQQ…QQQQ), and 570–579 (SSSDSADRSS).

Binds to RGA and SCL3 competitively. In terms of tissue distribution, highly expressed in leaf tissues.

Its subcellular location is the plastid. It localises to the chloroplast. In terms of biological role, transcription factor acting as a positive regulator of the starch synthase SS4. Controls chloroplast development and starch granule formation. Binds DNA via its zinc fingers. Recognizes and binds to SCL3 promoter sequence 5'-AGACAA-3' to promote its expression when in complex with RGA. This chain is Protein indeterminate-domain 5, chloroplastic, found in Arabidopsis thaliana (Mouse-ear cress).